Reading from the N-terminus, the 212-residue chain is Ras-related protein Rab-2A (212 aa).

Position 2 is an N-acetylalanine (Ala2). The segment at 2–19 (AYAYLFKYIIIGDTGVGK) is required for interaction with PRKCI. Residues Gly16, Val17, Gly18, Lys19, Ser20, Cys21, and Thr38 each contribute to the GTP site. Position 20 (Ser20) interacts with Mg(2+). A Switch 1 motif is present at residues 37–42 (LTIGVE). The Mg(2+) site is built by Thr38 and Asp61. Residues 63–72 (AGQESFRSIT) carry the Switch 2 motif. Residues Gly64, Asn119, Lys120, Asp122, Ala150, and Lys151 each coordinate GTP. 2 S-geranylgeranyl cysteine lipidation sites follow: Cys211 and Cys212.

This sequence belongs to the small GTPase superfamily. Rab family. As to quaternary structure, interacts with PRKCI. Interacts with TRIP11. Interacts (in GTP-bound form) with GARIN1B. Interacts (GTP-bound) with HOPS complex component VPS39; interaction contributes to obtaining a functional HOPS complex that promotes autophagosome-lysosome membrane fusion driven by STX17-SNAP29-VAMP8. May interact with VPS41. It depends on Mg(2+) as a cofactor. In terms of processing, prenylated. Prenylation is required for association with cellular membranes. As to expression, brain and parietal cells.

The protein resides in the endoplasmic reticulum-Golgi intermediate compartment membrane. It is found in the melanosome. It localises to the endoplasmic reticulum membrane. The protein localises to the golgi apparatus membrane. Its subcellular location is the cytoplasmic vesicle. The protein resides in the secretory vesicle. It is found in the acrosome. It localises to the autophagosome membrane. The enzyme catalyses GTP + H2O = GDP + phosphate + H(+). Its activity is regulated as follows. Regulated by guanine nucleotide exchange factors (GEFs) which promote the exchange of bound GDP for free GTP, GTPase activating proteins (GAPs) which increase the GTP hydrolysis activity, and GDP dissociation inhibitors (GDIs) which inhibit the dissociation of the nucleotide from the GTPase. Functionally, the small GTPases Rab are key regulators of intracellular membrane trafficking, from the formation of transport vesicles to their fusion with membranes. Rabs cycle between active GTP-bound and inactive GDP-bound states. In their active state, drive transport of vesicular carriers from donor organelles to acceptor organelles to regulate the membrane traffic that maintains organelle identity and morphology. RAB2A regulates autophagy by promoting autophagosome-lysosome fusion via recruitment of the HOPS endosomal tethering complex; this process involves autophagosomal RAB2A and lysosomal RAB39A recruitment of HOPS subcomplexes VPS39-VPS11 and VPS41-VPS16-VPS18-VPS33A, respectively, which assemble into a functional complex to mediate membrane tethering and SNAREs-driven membrane fusion. Required for protein transport from the endoplasmic reticulum to the Golgi complex. Regulates the compacted morphology of the Golgi. Together with RAB2B, redundantly required for efficient autophagic flux. This is Ras-related protein Rab-2A (RAB2A) from Oryctolagus cuniculus (Rabbit).